Reading from the N-terminus, the 351-residue chain is DNA polymerase IV (351 aa).

The 182-residue stretch at 4–185 (IIHVDMDCFF…LPLAKIPGVG (182 aa)) folds into the UmuC domain. The Mg(2+) site is built by Asp-8 and Asp-103. Glu-104 is an active-site residue.

This sequence belongs to the DNA polymerase type-Y family. In terms of assembly, monomer. Mg(2+) serves as cofactor.

The protein localises to the cytoplasm. The enzyme catalyses DNA(n) + a 2'-deoxyribonucleoside 5'-triphosphate = DNA(n+1) + diphosphate. Poorly processive, error-prone DNA polymerase involved in untargeted mutagenesis. Copies undamaged DNA at stalled replication forks, which arise in vivo from mismatched or misaligned primer ends. These misaligned primers can be extended by PolIV. Exhibits no 3'-5' exonuclease (proofreading) activity. May be involved in translesional synthesis, in conjunction with the beta clamp from PolIII. This is DNA polymerase IV from Escherichia coli O1:K1 / APEC.